Reading from the N-terminus, the 293-residue chain is MNQLKTASLLGLLSALLIGSSYALLGGSGGMVMGIGLAALTNLGAWYYSDQIALSAYQAQLVRPNQAPHLYAVVQRLAQRANLPMPRLYIIPSSAANAFATGRDPDHAAIAVTEGLLRMLPAAELEGVLAHELAHIQNRDTLTQAVAATLAGAIAFLAQMVSYSFWFFGSRGNDRESNPIGALLMIVLAPLSATILQLGISRTREFSADETAARLTGQPRALAQALSRLESNAQRNALGGNPAFAPLLIINPPVRQWLSNLFTTHPSTQDRINRLLKLEQQLQRRPSIAFTSL.

A run of 2 helical transmembrane segments spans residues 7 to 26 and 30 to 49; these read ASLLGLLSALLIGSSYALLG and GMVMGIGLAALTNLGAWYYS. His-131 serves as a coordination point for Zn(2+). The active site involves Glu-132. His-135 contributes to the Zn(2+) binding site. 2 helical membrane passes run 148 to 168 and 180 to 200; these read ATLAGAIAFLAQMVSYSFWFF and IGALLMIVLAPLSATILQLGI. Glu-205 contributes to the Zn(2+) binding site.

The protein belongs to the peptidase M48B family. The cofactor is Zn(2+).

It localises to the cell inner membrane. In Acaryochloris marina (strain MBIC 11017), this protein is Protease HtpX homolog.